Consider the following 829-residue polypeptide: Leucine--tRNA ligase (829 aa).

A 'HIGH' region motif is present at residues 40 to 50; it reads PYPSGNIHMGH. Residues 594 to 598 carry the 'KMSKS' region motif; sequence KMSKS. Lys-597 is a binding site for ATP.

This sequence belongs to the class-I aminoacyl-tRNA synthetase family.

It localises to the cytoplasm. It carries out the reaction tRNA(Leu) + L-leucine + ATP = L-leucyl-tRNA(Leu) + AMP + diphosphate. This chain is Leucine--tRNA ligase, found in Anaplasma marginale (strain St. Maries).